Here is a 569-residue protein sequence, read N- to C-terminus: Ribonuclease J (569 aa).

Zn(2+) is bound by residues histidine 81, histidine 83, aspartate 85, histidine 86, histidine 150, and aspartate 172. 373-377 (HASGH) contributes to the substrate binding site. Histidine 399 lines the Zn(2+) pocket.

The protein belongs to the metallo-beta-lactamase superfamily. RNA-metabolizing metallo-beta-lactamase-like family. Bacterial RNase J subfamily. In terms of assembly, homodimer, may be a subunit of the RNA degradosome. Zn(2+) is required as a cofactor.

It localises to the cytoplasm. Its function is as follows. An RNase that has 5'-3' exonuclease and possibly endoonuclease activity. Involved in maturation of rRNA and in some organisms also mRNA maturation and/or decay. This Mycoplasma pneumoniae (strain ATCC 29342 / M129 / Subtype 1) (Mycoplasmoides pneumoniae) protein is Ribonuclease J.